Here is a 544-residue protein sequence, read N- to C-terminus: Probable protein kinase UbiB (544 aa).

The 378-residue stretch at 123 to 500 (DFDEKALASA…RNKQRKSQYL (378 aa)) folds into the Protein kinase domain. ATP-binding positions include 129–137 (LASASIAQV) and K152. The active-site Proton acceptor is the D286. A run of 2 helical transmembrane segments spans residues 499–519 (YLLG…ISAS) and 522–542 (MAIA…YKSG).

It belongs to the ABC1 family. UbiB subfamily.

Its subcellular location is the cell inner membrane. It functions in the pathway cofactor biosynthesis; ubiquinone biosynthesis [regulation]. Is probably a protein kinase regulator of UbiI activity which is involved in aerobic coenzyme Q (ubiquinone) biosynthesis. Required for the expression of 2'-N-acetyltransferase. This Providencia stuartii protein is Probable protein kinase UbiB.